The primary structure comprises 359 residues: Stearoyl-CoA desaturase (359 aa).

Residues 1-72 (MPAHLLQEEI…EGPKPKLEYV (72 aa)) lie on the Cytoplasmic side of the membrane. Residues 73 to 93 (WRNIILMSLLHLGALYGITLI) form a helical membrane-spanning segment. Asparagine 75 is a substrate binding site. At 94–97 (PTCK) the chain is on the lumenal side. Residues 98–118 (IYTYIWVLFYYLMGALGITAG) traverse the membrane as a helical segment. At 119–217 (AHRLWSHRTY…EKLVMFQRRY (99 aa)) the chain is on the cytoplasmic side. Fe cation contacts are provided by histidine 120 and histidine 125. The short motif at 120-125 (HRLWSH) is the Histidine box-1 element. Substrate contacts are provided by asparagine 148, arginine 155, and aspartate 156. Residues histidine 157, histidine 160, and histidine 161 each coordinate Fe cation. The Histidine box-2 motif lies at 157–161 (HRAHH). Substrate-binding residues include arginine 188 and lysine 189. Serine 198 and serine 203 each carry phosphoserine. The chain crosses the membrane as a helical span at residues 218-237 (YKPGVLLLCFILPTLVPWYL). At 238–241 (WDET) the chain is on the lumenal side. A helical membrane pass occupies residues 242–263 (FQNSLFFATLFRYALGLNVTWL). Tryptophan 262 contributes to the substrate binding site. Residues 264-359 (VNSAAHMYGY…RTGEESYKSG (96 aa)) lie on the Cytoplasmic side of the membrane. Fe cation-binding residues include histidine 269, histidine 298, histidine 301, and histidine 302. Positions 298 to 302 (HNYHH) match the Histidine box-3 motif.

The protein belongs to the fatty acid desaturase type 1 family. The cofactor is Fe(2+).

It is found in the endoplasmic reticulum membrane. It carries out the reaction octadecanoyl-CoA + 2 Fe(II)-[cytochrome b5] + O2 + 2 H(+) = (9Z)-octadecenoyl-CoA + 2 Fe(III)-[cytochrome b5] + 2 H2O. It catalyses the reaction hexadecanoyl-CoA + 2 Fe(II)-[cytochrome b5] + O2 + 2 H(+) = (9Z)-hexadecenoyl-CoA + 2 Fe(III)-[cytochrome b5] + 2 H2O. Functionally, stearoyl-CoA desaturase that utilizes O(2) and electrons from reduced cytochrome b5 to introduce the first double bond into saturated fatty acyl-CoA substrates. Catalyzes the insertion of a cis double bond at the delta-9 position into fatty acyl-CoA substrates including palmitoyl-CoA and stearoyl-CoA. Gives rise to a mixture of 16:1 and 18:1 unsaturated fatty acids. Plays an important role in lipid biosynthesis. Plays an important role in regulating the expression of genes that are involved in lipogenesis and in regulating mitochondrial fatty acid oxidation. Plays an important role in body energy homeostasis. Contributes to the biosynthesis of membrane phospholipids, cholesterol esters and triglycerides. The protein is Stearoyl-CoA desaturase (SCD) of Bos taurus (Bovine).